A 244-amino-acid chain; its full sequence is Phosphoribosyl isomerase A (244 aa).

The active-site Proton acceptor is D10. Catalysis depends on D129, which acts as the Proton donor.

Belongs to the HisA/HisF family.

The protein resides in the cytoplasm. It catalyses the reaction 1-(5-phospho-beta-D-ribosyl)-5-[(5-phospho-beta-D-ribosylamino)methylideneamino]imidazole-4-carboxamide = 5-[(5-phospho-1-deoxy-D-ribulos-1-ylimino)methylamino]-1-(5-phospho-beta-D-ribosyl)imidazole-4-carboxamide. It carries out the reaction N-(5-phospho-beta-D-ribosyl)anthranilate = 1-(2-carboxyphenylamino)-1-deoxy-D-ribulose 5-phosphate. The protein operates within amino-acid biosynthesis; L-histidine biosynthesis; L-histidine from 5-phospho-alpha-D-ribose 1-diphosphate: step 4/9. Its pathway is amino-acid biosynthesis; L-tryptophan biosynthesis; L-tryptophan from chorismate: step 3/5. Functionally, involved in both the histidine and tryptophan biosynthetic pathways. The chain is Phosphoribosyl isomerase A from Mycobacterium ulcerans (strain Agy99).